Here is a 245-residue protein sequence, read N- to C-terminus: MHKNGNNGPVIDTKWHYLGPDSEKYGPYMSKDMLFWLQAGYFNDGLQLKTENEPNYHTLGEWSQLLGTHPFSMPVHSLDATIAQMNSMRPHGAMMMVPPGLQNQFQPPMPMRFPPFLPMPLLHQMNQNGPPMGAQMHSQPPSEPIDAGSLSHTPDSENETRLNEQTLQQPPSWLIALGLAGHGRKPHHHQQILAHQHIPQMQHANVATDQVVMKSVECQTEPVEISKEQASRVLSELLGQMVIIN.

The GYF domain maps to 12 to 60; that stretch reads DTKWHYLGPDSEKYGPYMSKDMLFWLQAGYFNDGLQLKTENEPNYHTLG. The interval 126-166 is disordered; that stretch reads NQNGPPMGAQMHSQPPSEPIDAGSLSHTPDSENETRLNEQT.

In terms of biological role, involved in negative regulation of early and late embryonic Notch signaling. This is Suppressor of aph-1 from Caenorhabditis elegans.